A 733-amino-acid chain; its full sequence is LAKRKAGGEEEDGEWRPPATQKRQKAGSEAESADCYRSPFRKPLTQLTNRPLCLDSSQHEAFIRSILSKPFKVPIPNYKGPTGLRALGIKRAGLRSPLHDPFEEGALVLYEPPLLSAHEQLKIDKDKVPVHVVVDPVLSRVLRPHQREGVKFLWDCVTSRRIPGSHGCIMADEMGLGKTLQCITLMWTLLRQSPDCKPEIEKAMVVSPSSLVRNWYNEVEKWLGGRIQPLAIDGGSKEEIDRKLVGSMNQRGLRVPSPILIISYETFRLHAEALQKGSVGLVICDEGHRLKNSENQTYQALNSLNTPRRVLISGTPIQNDLLEYFSLVHFVNSGILGTAQEFKRHFELPILKGRDADASEAERQKGEERLKELISIVNRCLIRRTSDILSKYLPVKIEQVVCCRLTPLQAELYKNFLKQAKPVEELKEGKINVSSLSSITSLKKLCNHPALIYDKCVEEEEGFMGALDLFPAGYSTKSVEPQLSGKMLVLDYILAVTKSTSNDKVVLVSNYTQTLDLFEKLCRNRRYLYVRLDGTMSIKKRAKVVERFNSPSSPEFIFMLSSKAGGCGLNLIGANRLVMFDPDWNPANDEQAMARVWRDGQKKTCYIYRLLSTGTIEEKIFQRQTHKKALSSCVVDEEQDVERHFSLGELKELFSLNETTISDTHDKIKCRRCVNGHQVRPPPEGSDCTSDLSQWNHCADKRGLQDSVLKAAWDAAVTFTFHHHSHEEQRGIP.

A disordered region spans residues 1-35; that stretch reads LAKRKAGGEEEDGEWRPPATQKRQKAGSEAESADC. The Helicase ATP-binding domain maps to 159 to 334; it reads SRRIPGSHGC…FSLVHFVNSG (176 aa). 172-179 contributes to the ATP binding site; sequence DEMGLGKT. A DEGH box motif is present at residues 285 to 288; that stretch reads DEGH. A Helicase C-terminal domain is found at 488–642; that stretch reads LVLDYILAVT…CVVDEEQDVE (155 aa). K504 carries the N6-acetyllysine modification. S561 bears the Phosphoserine; by NEK1 mark.

Belongs to the SNF2/RAD54 helicase family. Homohexamer. Interacts (via N-terminus) with RAD51. Interacts with NAP1L1. Interacts with BRD9; this interaction orchestrates RAD51-RAD54 complex formation. In terms of processing, acetylated. Acetylation promotes interaction with BRD9, and subsequently with RAD54, which is essential for homologous recombination (HR). Post-translationally, phosphorylated. Phosphorylation at Ser-561 by NEK1 specifically in G2 phase allows efficient removal of RAD51 filaments from DNA. Highly expressed in bursa, thymus, testis, and ovary. Low level of expression seen in all other organs tested.

The protein resides in the nucleus. Functionally, plays an essential role in homologous recombination (HR) which is a major pathway for repairing DNA double-strand breaks (DSBs), single-stranded DNA (ssDNA) gaps, and stalled or collapsed replication forks. Acts as a molecular motor during the homology search and guides RAD51 ssDNA along a donor dsDNA thereby changing the homology search from the diffusion-based mechanism to a motor-guided mechanism. Plays also an essential role in RAD51-mediated synaptic complex formation which consists of three strands encased in a protein filament formed once homology is recognized. Once DNA strand exchange occured, dissociates RAD51 from nucleoprotein filaments formed on dsDNA. The sequence is that of DNA repair and recombination protein RAD54-like (RAD54L) from Gallus gallus (Chicken).